The primary structure comprises 239 residues: Fatty acid metabolism regulator protein (239 aa).

The 69-residue stretch at glutamine 6–phenylalanine 74 folds into the HTH gntR-type domain. Residues glutamate 34–glutamine 53 constitute a DNA-binding region (H-T-H motif).

As to quaternary structure, homodimer.

The protein localises to the cytoplasm. Functionally, multifunctional regulator of fatty acid metabolism. In Klebsiella pneumoniae subsp. pneumoniae (strain ATCC 700721 / MGH 78578), this protein is Fatty acid metabolism regulator protein.